We begin with the raw amino-acid sequence, 550 residues long: Methionine--tRNA ligase (550 aa).

Positions 12 to 22 (PYANGPLHFGH) match the 'HIGH' region motif. Residues C144, C147, C157, and C160 each coordinate Zn(2+). Positions 330-334 (QFSKS) match the 'KMSKS' region motif. Residue K333 participates in ATP binding.

The protein belongs to the class-I aminoacyl-tRNA synthetase family. MetG type 1 subfamily. Monomer. Zn(2+) is required as a cofactor.

The protein resides in the cytoplasm. It catalyses the reaction tRNA(Met) + L-methionine + ATP = L-methionyl-tRNA(Met) + AMP + diphosphate. Functionally, is required not only for elongation of protein synthesis but also for the initiation of all mRNA translation through initiator tRNA(fMet) aminoacylation. This is Methionine--tRNA ligase from Chlamydia caviae (strain ATCC VR-813 / DSM 19441 / 03DC25 / GPIC) (Chlamydophila caviae).